A 426-amino-acid chain; its full sequence is Lipid droplet localized protein (426 aa).

Residues 278-298 (FYGYLIGLWIMFLSIFVKYPF) form a helical membrane-spanning segment.

Belongs to the saccharopine dehydrogenase family.

Its subcellular location is the membrane. The protein resides in the lipid droplet. The polypeptide is Lipid droplet localized protein (Caenorhabditis elegans).